Consider the following 323-residue polypeptide: RING-H2 finger protein ATL32 (323 aa).

The signal sequence occupies residues 1-28 (MMTRVECFNPHRWIILHVAIIIQSKANA). A helical membrane pass occupies residues 47–67 (TTVFAVLVTLFFLTGLLSVYI). The RING-type; atypical zinc finger occupies 124-166 (CAICLNELEDHETVRLLPICNHLFHIDCIDTWLYSHATCPVCR). The tract at residues 210 to 229 (SSEISGKFPRSNSTGHSMDR) is disordered.

It belongs to the RING-type zinc finger family. ATL subfamily.

It is found in the membrane. It carries out the reaction S-ubiquitinyl-[E2 ubiquitin-conjugating enzyme]-L-cysteine + [acceptor protein]-L-lysine = [E2 ubiquitin-conjugating enzyme]-L-cysteine + N(6)-ubiquitinyl-[acceptor protein]-L-lysine.. The protein operates within protein modification; protein ubiquitination. The polypeptide is RING-H2 finger protein ATL32 (ATL32) (Arabidopsis thaliana (Mouse-ear cress)).